We begin with the raw amino-acid sequence, 849 residues long: Membrane protein-large ribosomal subunit bL9 fusion protein (849 aa).

Positions 1 to 680 (MFSKNKHNTK…TQLEGTNIKT (680 aa)) are unknown. 2 helical membrane passes run 11–31 (FIVI…FDFQ) and 64–84 (IIFF…IISF). Residues 214 to 342 (KTLAIAMIAF…GGDQVVVNIE (129 aa)) form the GGDEF domain. A large ribosomal subunit protein bL9 region spans residues 681 to 849 (VTDTLKHFLK…FLNVTERKSK (169 aa)).

Belongs to the bacterial ribosomal protein bL9 family.

Its subcellular location is the cell membrane. Functionally, binds to the 23S rRNA. The protein is Membrane protein-large ribosomal subunit bL9 fusion protein of Aster yellows witches'-broom phytoplasma (strain AYWB).